Reading from the N-terminus, the 128-residue chain is Small ribosomal subunit protein eS6 (128 aa).

It belongs to the eukaryotic ribosomal protein eS6 family.

In Methanobrevibacter smithii (strain ATCC 35061 / DSM 861 / OCM 144 / PS), this protein is Small ribosomal subunit protein eS6.